We begin with the raw amino-acid sequence, 158 residues long: MSIALFPGSFDPLTNGHLDIIERASLMFDKVVVGVGYNTGKKALFTPEEKLALISEVVSDLPNVEVAIMHGLTVQFMAEIGARFIVRGLRNSKDFEYERDIAGVNSALADVETILLLAKPENQNISSSMVKEIGSMGADNMAKFVPKVVVDALKERLN.

Ser-9 lines the substrate pocket. ATP-binding positions include 9 to 10 and His-17; that span reads SF. Residues Lys-41, Thr-73, and Arg-87 each contribute to the substrate site. Residues 88–90, Glu-98, and 122–128 contribute to the ATP site; these read GLR and NQNISSS.

It belongs to the bacterial CoaD family. In terms of assembly, homohexamer. Mg(2+) serves as cofactor.

It is found in the cytoplasm. It catalyses the reaction (R)-4'-phosphopantetheine + ATP + H(+) = 3'-dephospho-CoA + diphosphate. It participates in cofactor biosynthesis; coenzyme A biosynthesis; CoA from (R)-pantothenate: step 4/5. Its function is as follows. Reversibly transfers an adenylyl group from ATP to 4'-phosphopantetheine, yielding dephospho-CoA (dPCoA) and pyrophosphate. This chain is Phosphopantetheine adenylyltransferase, found in Leuconostoc citreum (strain KM20).